Here is a 238-residue protein sequence, read N- to C-terminus: Uridylate kinase (238 aa).

12-15 is a binding site for ATP; that stretch reads KLSG. Gly54 serves as a coordination point for UMP. Positions 55 and 59 each coordinate ATP. Residues Asp74 and 135-142 contribute to the UMP site; that span reads TGNPFFTT. Residues Thr162, Tyr168, and Asp171 each contribute to the ATP site.

This sequence belongs to the UMP kinase family. As to quaternary structure, homohexamer.

It is found in the cytoplasm. The catalysed reaction is UMP + ATP = UDP + ADP. It participates in pyrimidine metabolism; CTP biosynthesis via de novo pathway; UDP from UMP (UMPK route): step 1/1. With respect to regulation, inhibited by UTP. In terms of biological role, catalyzes the reversible phosphorylation of UMP to UDP. The sequence is that of Uridylate kinase from Bordetella avium (strain 197N).